We begin with the raw amino-acid sequence, 144 residues long: Transcriptional regulator SlyA (144 aa).

Residues E2–H135 enclose the HTH marR-type domain. A DNA-binding region (H-T-H motif) is located at residues Q49 to E72.

The protein belongs to the SlyA family. Homodimer.

Functionally, transcription regulator that can specifically activate or repress expression of target genes. This chain is Transcriptional regulator SlyA, found in Escherichia coli O127:H6 (strain E2348/69 / EPEC).